Consider the following 336-residue polypeptide: Inactive serine/threonine-protein kinase PLK5 (336 aa).

A Protein kinase; truncated domain is found at 1 to 65 (MYTVLTGTPP…LDHLLQDDFF (65 aa)). Disordered regions lie at residues 109–135 (PCPF…WDGE) and 224–245 (GRTG…LPTP). The POLO box domain maps to 255-336 (LLRFLASEHA…HHALRMLQSI (82 aa)).

The protein belongs to the protein kinase superfamily. Ser/Thr protein kinase family. CDC5/Polo subfamily. Expressed in the brain, neurons and glial cells. Also expressed in highly differentiated cells, such as the serous acini in the parotid gland, distal and proximal tubules of the kidney, tubules of the seminal gland, Kupffer cells and some hepatocytes in the liver, and some cells in the germinal center of lymph nodes (at protein level).

It localises to the nucleus. Its subcellular location is the nucleolus. It is found in the cytoplasm. In terms of biological role, inactive serine/threonine-protein kinase that plays a role in cell cycle progression and neuronal differentiation. This Homo sapiens (Human) protein is Inactive serine/threonine-protein kinase PLK5 (PLK5).